Here is an 89-residue protein sequence, read N- to C-terminus: MTETNSRGRKIEVVGEVISDKMDKTISVLIYRMVKHAKYGKYVKKTSVFKAHDEKNQAKIGDIVKIRETRPLSKTKRWALAEVVETAKA.

The protein belongs to the universal ribosomal protein uS17 family. Part of the 30S ribosomal subunit.

Its function is as follows. One of the primary rRNA binding proteins, it binds specifically to the 5'-end of 16S ribosomal RNA. The polypeptide is Small ribosomal subunit protein uS17 (Bdellovibrio bacteriovorus (strain ATCC 15356 / DSM 50701 / NCIMB 9529 / HD100)).